The chain runs to 199 residues: Holliday junction branch migration complex subunit RuvA (199 aa).

The interval 1–64 (MFAYIKGTVE…EDIAVLYGFG (64 aa)) is domain I. Residues 65 to 143 (TVEELTMFEM…KEQLTSSIPM (79 aa)) form a domain II region. Residues 144 to 151 (TSPENNEV) are flexible linker. The segment at 152–199 (TGDSVLSEAVSALMVLGYGSAEASSTISGIYEKGISVEELVKKALKSL) is domain III.

It belongs to the RuvA family. As to quaternary structure, homotetramer. Forms an RuvA(8)-RuvB(12)-Holliday junction (HJ) complex. HJ DNA is sandwiched between 2 RuvA tetramers; dsDNA enters through RuvA and exits via RuvB. An RuvB hexamer assembles on each DNA strand where it exits the tetramer. Each RuvB hexamer is contacted by two RuvA subunits (via domain III) on 2 adjacent RuvB subunits; this complex drives branch migration. In the full resolvosome a probable DNA-RuvA(4)-RuvB(12)-RuvC(2) complex forms which resolves the HJ.

The protein resides in the cytoplasm. Functionally, the RuvA-RuvB-RuvC complex processes Holliday junction (HJ) DNA during genetic recombination and DNA repair, while the RuvA-RuvB complex plays an important role in the rescue of blocked DNA replication forks via replication fork reversal (RFR). RuvA specifically binds to HJ cruciform DNA, conferring on it an open structure. The RuvB hexamer acts as an ATP-dependent pump, pulling dsDNA into and through the RuvAB complex. HJ branch migration allows RuvC to scan DNA until it finds its consensus sequence, where it cleaves and resolves the cruciform DNA. The polypeptide is Holliday junction branch migration complex subunit RuvA (Ruminiclostridium cellulolyticum (strain ATCC 35319 / DSM 5812 / JCM 6584 / H10) (Clostridium cellulolyticum)).